The chain runs to 472 residues: 3-isopropylmalate dehydratase large subunit (472 aa).

Residues Cys-353, Cys-414, and Cys-417 each coordinate [4Fe-4S] cluster.

It belongs to the aconitase/IPM isomerase family. LeuC type 1 subfamily. In terms of assembly, heterodimer of LeuC and LeuD. It depends on [4Fe-4S] cluster as a cofactor.

It catalyses the reaction (2R,3S)-3-isopropylmalate = (2S)-2-isopropylmalate. It participates in amino-acid biosynthesis; L-leucine biosynthesis; L-leucine from 3-methyl-2-oxobutanoate: step 2/4. In terms of biological role, catalyzes the isomerization between 2-isopropylmalate and 3-isopropylmalate, via the formation of 2-isopropylmaleate. This chain is 3-isopropylmalate dehydratase large subunit, found in Psychrobacter cryohalolentis (strain ATCC BAA-1226 / DSM 17306 / VKM B-2378 / K5).